A 375-amino-acid polypeptide reads, in one-letter code: DNA replication and repair protein RecF (375 aa).

30-37 (GENAQGKT) contributes to the ATP binding site.

It belongs to the RecF family.

The protein resides in the cytoplasm. In terms of biological role, the RecF protein is involved in DNA metabolism; it is required for DNA replication and normal SOS inducibility. RecF binds preferentially to single-stranded, linear DNA. It also seems to bind ATP. The protein is DNA replication and repair protein RecF of Bacillus cereus (strain ZK / E33L).